A 968-amino-acid polypeptide reads, in one-letter code: Dynein axonemal intermediate chain 3 (968 aa).

The segment covering 1 to 33 (MKDTSSKRPKSKEANKKKTKDKSNADNLPKPEE) has biased composition (basic and acidic residues). Disordered stretches follow at residues 1–39 (MKDT…ASEP) and 136–166 (KPPA…PEPQ). Residues 141-157 (GADEQMEDEEQQEEEEE) are compositionally biased toward acidic residues. 3 WD repeats span residues 407–447 (ECPD…DRLQ), 480–536 (GHKA…VMVH), and 712–753 (VYSK…RQPS). A coiled-coil region spans residues 830–857 (LHTHTDQLRVLEERVREAKQNLLAVSDR). Over residues 897–919 (KRQSDHQKKKKETEAEQQKKKTE) the composition is skewed to basic and acidic residues. The segment at 897–930 (KRQSDHQKKKKETEAEQQKKKTELVTPPKQEEEV) is disordered.

In terms of assembly, part of the multisubunit axonemal dynein complex formed at least of two heavy chains and a number of intermediate and light chains.

The protein localises to the cytoplasm. Functionally, may be involved in the regulation of cilia function. The sequence is that of Dynein axonemal intermediate chain 3 (dnai3) from Danio rerio (Zebrafish).